Consider the following 152-residue polypeptide: SsrA-binding protein (152 aa).

The interval 130 to 152 (HDKRQDLKQRQDKREMERAMKQR) is disordered. Residues 132–152 (KRQDLKQRQDKREMERAMKQR) are compositionally biased toward basic and acidic residues.

This sequence belongs to the SmpB family.

Its subcellular location is the cytoplasm. Functionally, required for rescue of stalled ribosomes mediated by trans-translation. Binds to transfer-messenger RNA (tmRNA), required for stable association of tmRNA with ribosomes. tmRNA and SmpB together mimic tRNA shape, replacing the anticodon stem-loop with SmpB. tmRNA is encoded by the ssrA gene; the 2 termini fold to resemble tRNA(Ala) and it encodes a 'tag peptide', a short internal open reading frame. During trans-translation Ala-aminoacylated tmRNA acts like a tRNA, entering the A-site of stalled ribosomes, displacing the stalled mRNA. The ribosome then switches to translate the ORF on the tmRNA; the nascent peptide is terminated with the 'tag peptide' encoded by the tmRNA and targeted for degradation. The ribosome is freed to recommence translation, which seems to be the essential function of trans-translation. This is SsrA-binding protein from Thermosynechococcus vestitus (strain NIES-2133 / IAM M-273 / BP-1).